We begin with the raw amino-acid sequence, 117 residues long: Large ribosomal subunit protein bL20 (117 aa).

This sequence belongs to the bacterial ribosomal protein bL20 family.

Its function is as follows. Binds directly to 23S ribosomal RNA and is necessary for the in vitro assembly process of the 50S ribosomal subunit. It is not involved in the protein synthesizing functions of that subunit. This Rickettsia bellii (strain OSU 85-389) protein is Large ribosomal subunit protein bL20.